Reading from the N-terminus, the 485-residue chain is Predicted GPI-anchored protein 27 (485 aa).

An N-terminal signal peptide occupies residues 1–20 (MHFTSSLLATLIWFTLPVQS). N-linked (GlcNAc...) asparagine glycans are attached at residues Asn30, Asn86, Asn96, and Asn444. Gly467 is lipidated: GPI-anchor amidated glycine. Residues 468-485 (LVLVSSGVLLGTCLLFIL) constitute a propeptide, removed in mature form.

It is found in the cell membrane. The protein is Predicted GPI-anchored protein 27 (PGA27) of Candida albicans (strain SC5314 / ATCC MYA-2876) (Yeast).